Consider the following 977-residue polypeptide: Synaptonemal complex protein 2-like (977 aa).

4 disordered regions span residues 447–474 (LGSQ…LSNA), 574–593 (QSTE…NSPL), 642–728 (RNKS…QDIM), and 804–824 (TEKN…VFYS). Residues 449-462 (SQTSEHSSTTKTSS) are compositionally biased toward low complexity. Positions 463–474 (ANRSVQKSLSNA) are enriched in polar residues. Basic and acidic residues predominate over residues 674-693 (SRKEMHRPEDINPKSPHSAE).

It belongs to the SYCP2 family. In terms of processing, ubiquitinated and gradually degraded by the proteasome during oocyte maturation. Post-translationally, phosphorylated in maturing oocytes, before its degradation. As to expression, expressed in immature oocytes (at protein level). Expressed in the ovary.

It is found in the nucleus. It localises to the chromosome. The protein resides in the centromere. The protein localises to the nucleolus. Its function is as follows. Oocyte-specific protein that localizes to centromeres at the dictyate stage and regulates the survival of primordial oocytes. The polypeptide is Synaptonemal complex protein 2-like (sycp2l) (Xenopus laevis (African clawed frog)).